Reading from the N-terminus, the 286-residue chain is MSWDDEDFDIPSNSKQAAASWEEEGNDEPLLDSWDIDEEEVARKKKEEEAKKKAEKEALKKKQEESKAKKLSKNKGQRALLDIDLVDENTRQELLKKAELDADLNNAADLFGGLGVAGEGGMDINEHPRERAAKAAAAAAAASGPTPARLTKDTPIDTHPLFQPTDRQEYEKLRKALAPVLTNLAEDSLMNYSSGLAIDLIRDLAQPLSIESIRKVVSTLNVISKEKEKAERQARLKKAGGTATGGAGKKKAKPAVKTNVNTSFKQDVFDDIDQSKYDEFEEDDFM.

Disordered regions lie at residues 1 to 35, 141 to 162, and 229 to 258; these read MSWD…DSWD, AASG…HPLF, and KAER…AVKT. Positions 21 to 35 are enriched in acidic residues; that stretch reads WEEEGNDEPLLDSWD. Residues 35–75 are a coiled coil; it reads DIDEEEVARKKKEEEAKKKAEKEALKKKQEESKAKKLSKNK.

Belongs to the eIF-3 subunit J family. Component of the eukaryotic translation initiation factor 3 (eIF-3) complex.

It localises to the cytoplasm. Component of the eukaryotic translation initiation factor 3 (eIF-3) complex, which is involved in protein synthesis of a specialized repertoire of mRNAs and, together with other initiation factors, stimulates binding of mRNA and methionyl-tRNAi to the 40S ribosome. The eIF-3 complex specifically targets and initiates translation of a subset of mRNAs involved in cell proliferation. This chain is Eukaryotic translation initiation factor 3 subunit J, found in Debaryomyces hansenii (strain ATCC 36239 / CBS 767 / BCRC 21394 / JCM 1990 / NBRC 0083 / IGC 2968) (Yeast).